The sequence spans 308 residues: Quinolinate synthase (308 aa).

Iminosuccinate is bound by residues His-21 and Ser-38. A [4Fe-4S] cluster-binding site is contributed by Cys-83. Residues 109 to 111 and Ser-126 contribute to the iminosuccinate site; that span reads YIN. Cys-170 contacts [4Fe-4S] cluster. Iminosuccinate-binding positions include 196–198 and Thr-213; that span reads HPE. Cys-263 serves as a coordination point for [4Fe-4S] cluster.

It belongs to the quinolinate synthase family. Type 2 subfamily. [4Fe-4S] cluster serves as cofactor.

The protein resides in the cytoplasm. The catalysed reaction is iminosuccinate + dihydroxyacetone phosphate = quinolinate + phosphate + 2 H2O + H(+). The protein operates within cofactor biosynthesis; NAD(+) biosynthesis; quinolinate from iminoaspartate: step 1/1. Functionally, catalyzes the condensation of iminoaspartate with dihydroxyacetone phosphate to form quinolinate. This Sulfurisphaera tokodaii (strain DSM 16993 / JCM 10545 / NBRC 100140 / 7) (Sulfolobus tokodaii) protein is Quinolinate synthase.